The sequence spans 416 residues: Serine hydroxymethyltransferase (416 aa).

(6S)-5,6,7,8-tetrahydrofolate contacts are provided by residues Leu-120 and 124–126 (GHL). An N6-(pyridoxal phosphate)lysine modification is found at Lys-230. (6S)-5,6,7,8-tetrahydrofolate is bound at residue Glu-246.

This sequence belongs to the SHMT family. In terms of assembly, homodimer. Pyridoxal 5'-phosphate is required as a cofactor.

The protein resides in the cytoplasm. The catalysed reaction is (6R)-5,10-methylene-5,6,7,8-tetrahydrofolate + glycine + H2O = (6S)-5,6,7,8-tetrahydrofolate + L-serine. The protein operates within one-carbon metabolism; tetrahydrofolate interconversion. It participates in amino-acid biosynthesis; glycine biosynthesis; glycine from L-serine: step 1/1. Catalyzes the reversible interconversion of serine and glycine with tetrahydrofolate (THF) serving as the one-carbon carrier. This reaction serves as the major source of one-carbon groups required for the biosynthesis of purines, thymidylate, methionine, and other important biomolecules. Also exhibits THF-independent aldolase activity toward beta-hydroxyamino acids, producing glycine and aldehydes, via a retro-aldol mechanism. In Onion yellows phytoplasma (strain OY-M), this protein is Serine hydroxymethyltransferase.